A 198-amino-acid polypeptide reads, in one-letter code: Auxin-binding protein 1 (198 aa).

An N-terminal signal peptide occupies residues 1–33 (MIVLSVGSASSSPIVVVFSVALLLFYFSETSLG). A disulfide bridge links C36 with C189. Zn(2+) is bound by residues H92, H94, and E98. A glycan (N-linked (GlcNAc...) asparagine) is linked at N130. H141 contacts Zn(2+). The Prevents secretion from ER motif lies at 195-198 (KDEL).

Homodimer. May interact with the GPI-anchored plasma membrane protein SKU5 and its family members. Interacts with TMK1 (via extracellular domain). In terms of processing, glycosylated. Post-translationally, ubiquitinated by RMA2, leading to proteasomal degradation.

It is found in the endoplasmic reticulum lumen. The protein localises to the cell membrane. Functionally, auxin receptor that controls cell elongation and cell division. Involved in embryonic morphogenesis. Acts on the cell cycle, endocycle, cell plate formation, and cell expansion and contributes to the control of auxin-related gene expression. Controls root meristem size and mediates auxin responsiveness. Involved in activation of ROP GTPases in response to auxin and regulation of clathrin-mediated endocytosis in roots. Acts as a positive factor in clathrin recruitment to the plasma membrane, thereby promoting endocytosis. Upon auxin binding, restricts the internalization of PIN proteins by inhibiting clathrin-mediated endocytosis. Promotes auxin-triggered phosphorylation status modulation of RAF-like kinases (e.g. RAF20 and RAF24). Involved in the regulation of polar auxin transport. Behaves as a negative regulator of the SCF(TIR1/AFB) signaling pathway, protecting AUX/IAA repressors from degradation. Regulates the expression of cell wall remodeling genes via an SCF(TIR1/AFB)-dependent pathway. Involved in the modulation of hemicellulose xyloglucan structure. Required for rapid auxin-mediated re-orientation of microtubules to regulate cell elongation in roots and dark-grown hypocotyls as well as asymmetric growth during gravitropic responses. Involved in the shade avoidance response. Forms with TMK1 a cell surface auxin perception complex that activates ROP signaling pathways. ABP1 sensing of auxin is important for the ABP1-TMK1 complex formation. Interacts functionally with phytochrome to regulate growth. The polypeptide is Auxin-binding protein 1 (Arabidopsis thaliana (Mouse-ear cress)).